We begin with the raw amino-acid sequence, 302 residues long: F-box protein SKIP19 (302 aa).

The F-box domain occupies 16–63 (STNWTELPPELTSAILHRLGAIEILENAQKVCRSWRRVCKDPSMWRKI).

As to quaternary structure, part of a SCF (ASK-cullin-F-box) protein ligase complex. Interacts with CUL1 and SPK1B/ASK2.

Its subcellular location is the nucleus. The protein operates within protein modification; protein ubiquitination. Functionally, component of SCF(ASK-cullin-F-box) E3 ubiquitin ligase complexes, which may mediate the ubiquitination and subsequent proteasomal degradation of target proteins. The sequence is that of F-box protein SKIP19 (SKIP19) from Arabidopsis thaliana (Mouse-ear cress).